The sequence spans 227 residues: Broad specificity amino-acid racemase RacX (227 aa).

51 to 53 (DRP) contacts substrate. Cys-82 functions as the Proton donor/acceptor in the catalytic mechanism. Residues 83 to 85 (NTA) and Lys-161 contribute to the substrate site. Cys-191 functions as the Proton donor/acceptor in the catalytic mechanism.

Belongs to the aspartate/glutamate racemases family. Homodimer.

The catalysed reaction is an L-alpha-amino acid = a D-alpha-amino acid. It carries out the reaction (2S,6S)-2,6-diaminopimelate = meso-2,6-diaminopimelate. It catalyses the reaction L-lysine = D-lysine. The enzyme catalyses L-arginine = D-arginine. The catalysed reaction is L-ornithine = D-ornithine. It carries out the reaction L-histidine = D-histidine. It catalyses the reaction L-alanine = D-alanine. The enzyme catalyses L-tyrosine = D-tyrosine. The catalysed reaction is L-phenylalanine = D-phenylalanine. It carries out the reaction L-serine = D-serine. It catalyses the reaction L-glutamine = D-glutamine. The enzyme catalyses L-methionine = D-methionine. The catalysed reaction is L-asparagine = D-asparagine. It carries out the reaction L-homoserine = D-homoserine. Its function is as follows. Amino-acid racemase able to utilize a broad range of substrates. Preferentially catalyzes the epimerization of LL-diaminopimelate, as well as the racemization of D-lysine, L-arginine, L-ornithine, L-lysine and D-arginine. Has lower activity against D-ornithine, L-histidine, L-alanine, L-tyrosine, L-phenylalanine, L-serine, L-glutamine, L-methionine, L-asparagine and L-homoserine. Has weak activity against L-norleucine, L-aminobutyric acid and L-norvaline. Has no activity toward nine L-amino acids (Thr, Glu, Asp, Val, Leu, Ile, Trp, Cit and Aad). D-amino acids might be used as components of peptidoglycan and/or be involved in peptidoglycan metabolism and remodeling. In Bacillus subtilis (strain 168), this protein is Broad specificity amino-acid racemase RacX (racX).